The sequence spans 81 residues: Small ribosomal subunit protein bS16 (81 aa).

Belongs to the bacterial ribosomal protein bS16 family.

The sequence is that of Small ribosomal subunit protein bS16 from Clostridium acetobutylicum (strain ATCC 824 / DSM 792 / JCM 1419 / IAM 19013 / LMG 5710 / NBRC 13948 / NRRL B-527 / VKM B-1787 / 2291 / W).